We begin with the raw amino-acid sequence, 334 residues long: Protein-methionine-sulfoxide reductase catalytic subunit MsrP (334 aa).

The tat-type signal signal peptide spans 1 to 44; the sequence is MKKNQFLKESDVTAESVFFMKRRQVLKALGISAAAFSLPHAAHA. Mo-molybdopterin contacts are provided by residues Asn88, 91 to 92, Cys146, Thr181, Asn233, Arg238, and 249 to 251; these read YE and GIK.

This sequence belongs to the MsrP family. In terms of assembly, heterodimer of a catalytic subunit (MsrP) and a heme-binding subunit (MsrQ). It depends on Mo-molybdopterin as a cofactor. Post-translationally, predicted to be exported by the Tat system. The position of the signal peptide cleavage has not been experimentally proven.

The protein localises to the periplasm. The enzyme catalyses L-methionyl-[protein] + a quinone + H2O = L-methionyl-(S)-S-oxide-[protein] + a quinol. It carries out the reaction L-methionyl-[protein] + a quinone + H2O = L-methionyl-(R)-S-oxide-[protein] + a quinol. Its function is as follows. Part of the MsrPQ system that repairs oxidized periplasmic proteins containing methionine sulfoxide residues (Met-O), using respiratory chain electrons. Thus protects these proteins from oxidative-stress damage caused by reactive species of oxygen and chlorine generated by the host defense mechanisms. MsrPQ is essential for the maintenance of envelope integrity under bleach stress, rescuing a wide series of structurally unrelated periplasmic proteins from methionine oxidation, including the primary periplasmic chaperone SurA and the lipoprotein Pal. The catalytic subunit MsrP is non-stereospecific, being able to reduce both (R-) and (S-) diastereoisomers of methionine sulfoxide. This Escherichia coli O6:H1 (strain CFT073 / ATCC 700928 / UPEC) protein is Protein-methionine-sulfoxide reductase catalytic subunit MsrP.